The sequence spans 165 residues: Natriuretic peptide Na-NP (165 aa).

The N-terminal stretch at 1–25 (MVGLSRLAGGGLLLVLALLPLALDG) is a signal peptide. The propeptide occupies 26-83 (KPAPEALHKPPTGLRTSLAALRILGYLRPDSKQSRAARDRMLHPEQQVGGGGDSRPLQ). The span at 56–68 (SKQSRAARDRMLH) shows a compositional bias: basic and acidic residues. Disordered stretches follow at residues 56–100 (SKQS…QKID) and 135–165 (PDSK…SRVI). Cysteines 94 and 110 form a disulfide. The propeptide occupies 129-165 (ILEYLRPDSKRSRATRDRMLHPEQQVGGGGGGGSRVI). The span at 135–149 (PDSKRSRATRDRMLH) shows a compositional bias: basic and acidic residues. Residues 154 to 165 (VGGGGGGGSRVI) show a composition bias toward gly residues.

The protein belongs to the natriuretic peptide family. In terms of tissue distribution, expressed by the venom gland.

Its subcellular location is the secreted. Natriuretic peptide that dose-dependently induces the rapid relaxation of rat aortic strips phenylephrine-precontracted. Acts by stimulating cGMP production in a dose-dependent manner (by probably activating NPR1 and/or NPR2). May also show potent hypotensive effects. In Naja atra (Chinese cobra), this protein is Natriuretic peptide Na-NP.